A 501-amino-acid chain; its full sequence is ADP,ATP carrier protein 3 (501 aa).

Transmembrane regions (helical) follow at residues 23-43 (LKLF…FGAL), 59-79 (IISL…TVLY), 90-110 (YIFY…AYII), 146-166 (YALM…LMFW), 183-203 (PVLG…LVFF), 227-247 (IMLQ…MLLF), 293-313 (IALL…PWKA), 326-346 (FNFM…FMVI), 361-381 (LLTP…IIFI), 383-403 (EIGA…VGAI), 446-466 (FGKS…PTAT), and 470-490 (IIIY…WNVI).

The protein belongs to the ADP/ATP translocase tlc family.

It is found in the cell membrane. In terms of biological role, provides the rickettsial cell with host ATP in exchange for rickettsial ADP. This is an obligate exchange system. This energy acquiring activity is an important component of rickettsial parasitism. The chain is ADP,ATP carrier protein 3 (tlcC) from Rickettsia felis (strain ATCC VR-1525 / URRWXCal2) (Rickettsia azadi).